Reading from the N-terminus, the 581-residue chain is Ras-specific guanine nucleotide-releasing factor RalGPS1 (581 aa).

Residues 1-31 (MYRRNGLPASVSITSRNTQDSSSSESLDGRS) form a disordered region. The Ras-GEF domain occupies 49 to 288 (TPEEFASQIT…YSLSLKIEPG (240 aa)). A disordered region spans residues 320-339 (PDTSVVAHLPTPPPARHRKS). A PXXP motif is present at residues 329-332 (PTPP). A PH domain is found at 455–567 (SITIEGPLRR…WHRHLAEACR (113 aa)).

It localises to the cytoplasm. The protein resides in the cell membrane. Its function is as follows. Guanine nucleotide exchange factor. May be involved in cytoskeletal organization. The protein is Ras-specific guanine nucleotide-releasing factor RalGPS1 (ralgps1) of Danio rerio (Zebrafish).